Reading from the N-terminus, the 838-residue chain is Calmodulin-binding transcription activator 6 (838 aa).

The segment at residues 25 to 134 is a DNA-binding region (CG-1); it reads VQTMLEEAKS…YRDTQEAATT (110 aa). The stretch at 525-554 is one ANK repeat; that stretch reads QGWTALHWAAYYGREKMVAALLSAGARPNL. IQ domains are found at residues 671 to 700, 713 to 742, and 788 to 817; these read SIIA…IQCR, MRRQ…SVGV, and LERS…THEE. The tract at residues 738–760 is calmodulin-binding; it reads WSVGVLEKAVLRWRQKRKGFRGL. Residues 802–822 adopt a coiled-coil conformation; sequence KKAQQDYRRMKLTHEEAQVNH.

This sequence belongs to the CAMTA family. As to expression, expressed in roots, stems, leaves, sepals, petals, stamen filaments, top of carpels, anthers and siliques, but not in stigmas.

It is found in the nucleus. Its function is as follows. Transcription activator that binds calmodulin in a calcium-dependent manner in vitro. Binds to the DNA consensus sequence 5'-[ACG]CGCG[GTC]-3'. Regulates transcriptional activity in response to calcium signals. The sequence is that of Calmodulin-binding transcription activator 6 from Arabidopsis thaliana (Mouse-ear cress).